The primary structure comprises 502 residues: Chromatin structure-remodeling complex protein RSC58 (502 aa).

Positions 19–134 (SILNAASVKC…KFSSELLLRE (116 aa)) constitute a Bromo domain. The disordered stretch occupies residues 336–378 (NEEGINRKQNDENNKNVDGKSNGVQDDGGDNDNDATIASANSE). Residues 339–353 (GINRKQNDENNKNVD) are compositionally biased toward basic and acidic residues.

Component of the two forms of the RSC complex composed of at least either RSC1 or RSC2, and ARP7, ARP9, LDB7, NPL6, RSC3, RSC30, RSC4, RSC58, RSC6, RSC8, RSC9, SFH1, STH1, HTL1 and probably RTT102. The complexes interact with histone and histone variant components of centromeric chromatin.

It localises to the nucleus. Its function is as follows. Component of the chromatin structure-remodeling complex (RSC), which is involved in transcription regulation and nucleosome positioning. RSC is responsible for the transfer of a histone octamer from a nucleosome core particle to naked DNA. The reaction requires ATP and involves an activated RSC-nucleosome intermediate. Remodeling reaction also involves DNA translocation, DNA twist and conformational change. As a reconfigurer of centromeric and flanking nucleosomes, RSC complex is required both for proper kinetochore function in chromosome segregation and, via a PKC1-dependent signaling pathway, for organization of the cellular cytoskeleton. The sequence is that of Chromatin structure-remodeling complex protein RSC58 (RSC58) from Saccharomyces cerevisiae (strain ATCC 204508 / S288c) (Baker's yeast).